Reading from the N-terminus, the 409-residue chain is Translation initiation factor 2 subunit gamma (409 aa).

Residues 7-203 form the tr-type G domain; sequence QPEVNIGLVG…AIEREIPTPE (197 aa). Positions 16–23 are G1; sequence GHVDHGKT. Positions 19, 23, 44, and 46 each coordinate Mg(2+). Position 19–24 (19–24) interacts with GTP; sequence DHGKTT. The tract at residues 44 to 48 is G2; the sequence is GISIR. The tract at residues 90–93 is G3; the sequence is DAPG. GTP-binding positions include 146–149 and 181–183; these read NKID and SAQ. Residues 146–149 are G4; sequence NKID. The interval 181–183 is G5; that stretch reads SAQ.

Belongs to the TRAFAC class translation factor GTPase superfamily. Classic translation factor GTPase family. EIF2G subfamily. As to quaternary structure, heterotrimer composed of an alpha, a beta and a gamma chain. The cofactor is Mg(2+).

It catalyses the reaction GTP + H2O = GDP + phosphate + H(+). Its function is as follows. eIF-2 functions in the early steps of protein synthesis by forming a ternary complex with GTP and initiator tRNA. The polypeptide is Translation initiation factor 2 subunit gamma (Haloquadratum walsbyi (strain DSM 16790 / HBSQ001)).